A 156-amino-acid chain; its full sequence is Large ribosomal subunit protein uL22 (156 aa).

This sequence belongs to the universal ribosomal protein uL22 family. In terms of assembly, part of the 50S ribosomal subunit.

In terms of biological role, this protein binds specifically to 23S rRNA. It makes multiple contacts with different domains of the 23S rRNA in the assembled 50S subunit and ribosome. Functionally, the globular domain of the protein is located near the polypeptide exit tunnel on the outside of the subunit, while an extended beta-hairpin is found that lines the wall of the exit tunnel in the center of the 70S ribosome. The polypeptide is Large ribosomal subunit protein uL22 (Sulfurisphaera tokodaii (strain DSM 16993 / JCM 10545 / NBRC 100140 / 7) (Sulfolobus tokodaii)).